A 3394-amino-acid chain; its full sequence is Protein PFC0760c (3394 aa).

Low complexity-rich tracts occupy residues 471–508 (NNND…NYNN), 515–528 (NMNS…NNLH), and 786–841 (NNQN…NQNN). 8 disordered regions span residues 471-539 (NNND…DENN), 779-844 (MSSN…NAGI), 1038-1099 (NKKK…NNDD), 1892-1918 (TTTT…NNND), 2648-2693 (KMDL…DNHL), 2835-2909 (AKNE…NSNN), 3000-3057 (VSVG…DVNT), and 3107-3394 (DYVN…NSEE). Residues 1038-1097 (NKKKNNDGDNKSQEDDDGNKKKNNDGDNKSQEDDDGNKKKNNDGDNKSQEDDYGNKKKNN) are compositionally biased toward basic and acidic residues. Over residues 2657 to 2671 (GDDDDDDDDDDDDDN) the composition is skewed to acidic residues. The segment covering 2672-2686 (NNNNNNNNNNNNNNM) has biased composition (low complexity). Polar residues predominate over residues 2836 to 2846 (KNENYPVSTHY). 2 stretches are compositionally biased toward low complexity: residues 2855–2865 (DNINNDNNNDN) and 2872–2909 (NDNI…NSNN). Composition is skewed to acidic residues over residues 3007–3047 (DNND…EEKE) and 3147–3257 (DDDE…DDND). Basic and acidic residues predominate over residues 3258–3292 (NDHNDDNNDEEKYSCHDDKNEHTNNDLLNIDHDNN). Residues 3300–3309 (LYSTYNVSVS) are compositionally biased toward polar residues. The span at 3310-3320 (HNKDPSNKENE) shows a compositional bias: basic and acidic residues. Over residues 3321–3330 (IQNLISIDSS) the composition is skewed to polar residues. The span at 3331–3379 (NENDENDENDENDENDENDENDENDENDENDENDEKDENDENDENDENF) shows a compositional bias: acidic residues. A compositionally biased stretch (polar residues) spans 3385 to 3394 (GTLNEMNSEE).

This is Protein PFC0760c from Plasmodium falciparum (isolate 3D7).